An 874-amino-acid chain; its full sequence is Alanine--tRNA ligase (874 aa).

Zn(2+) is bound by residues histidine 562, histidine 566, cysteine 664, and histidine 668.

Belongs to the class-II aminoacyl-tRNA synthetase family. Requires Zn(2+) as cofactor.

The protein resides in the cytoplasm. It carries out the reaction tRNA(Ala) + L-alanine + ATP = L-alanyl-tRNA(Ala) + AMP + diphosphate. Functionally, catalyzes the attachment of alanine to tRNA(Ala) in a two-step reaction: alanine is first activated by ATP to form Ala-AMP and then transferred to the acceptor end of tRNA(Ala). Also edits incorrectly charged Ser-tRNA(Ala) and Gly-tRNA(Ala) via its editing domain. In Neisseria meningitidis serogroup B (strain ATCC BAA-335 / MC58), this protein is Alanine--tRNA ligase.